A 129-amino-acid chain; its full sequence is Large ribosomal subunit protein bL12 (129 aa).

It belongs to the bacterial ribosomal protein bL12 family. As to quaternary structure, homodimer. Part of the ribosomal stalk of the 50S ribosomal subunit. Forms a multimeric L10(L12)X complex, where L10 forms an elongated spine to which 2 to 4 L12 dimers bind in a sequential fashion. Binds GTP-bound translation factors.

Functionally, forms part of the ribosomal stalk which helps the ribosome interact with GTP-bound translation factors. Is thus essential for accurate translation. The protein is Large ribosomal subunit protein bL12 of Synechococcus sp. (strain CC9605).